The sequence spans 419 residues: Tyrosine--tRNA ligase (419 aa).

Position 34 (Tyr-34) interacts with L-tyrosine. Positions 39–48 (PTADSLHLGN) match the 'HIGH' region motif. L-tyrosine is bound by residues Tyr-169 and Gln-173. A 'KMSKS' region motif is present at residues 229–233 (KFGKS). Residue Lys-232 participates in ATP binding. The 67-residue stretch at 353–419 (LTLIELLISV…GKKKNFVLTY (67 aa)) folds into the S4 RNA-binding domain.

This sequence belongs to the class-I aminoacyl-tRNA synthetase family. TyrS type 1 subfamily. As to quaternary structure, homodimer.

The protein resides in the cytoplasm. It carries out the reaction tRNA(Tyr) + L-tyrosine + ATP = L-tyrosyl-tRNA(Tyr) + AMP + diphosphate + H(+). In terms of biological role, catalyzes the attachment of tyrosine to tRNA(Tyr) in a two-step reaction: tyrosine is first activated by ATP to form Tyr-AMP and then transferred to the acceptor end of tRNA(Tyr). The sequence is that of Tyrosine--tRNA ligase from Lactococcus lactis subsp. cremoris (strain MG1363).